The sequence spans 350 residues: Protein RecA (350 aa).

Position 68–75 (68–75 (GPESSGKT)) interacts with ATP.

Belongs to the RecA family.

The protein resides in the cytoplasm. Its function is as follows. Can catalyze the hydrolysis of ATP in the presence of single-stranded DNA, the ATP-dependent uptake of single-stranded DNA by duplex DNA, and the ATP-dependent hybridization of homologous single-stranded DNAs. It interacts with LexA causing its activation and leading to its autocatalytic cleavage. The sequence is that of Protein RecA from Mycolicibacterium vanbaalenii (strain DSM 7251 / JCM 13017 / BCRC 16820 / KCTC 9966 / NRRL B-24157 / PYR-1) (Mycobacterium vanbaalenii).